The primary structure comprises 255 residues: Phosphate import ATP-binding protein PstB (255 aa).

The 241-residue stretch at 10–250 (INIKDLNLWY…PQMKSTEDYI (241 aa)) folds into the ABC transporter domain. 42–49 (GPSGCGKS) is an ATP binding site.

It belongs to the ABC transporter superfamily. Phosphate importer (TC 3.A.1.7) family. The complex is composed of two ATP-binding proteins (PstB), two transmembrane proteins (PstC and PstA) and a solute-binding protein (PstS).

The protein resides in the cell membrane. It catalyses the reaction phosphate(out) + ATP + H2O = ADP + 2 phosphate(in) + H(+). Part of the ABC transporter complex PstSACB involved in phosphate import. Responsible for energy coupling to the transport system. The protein is Phosphate import ATP-binding protein PstB of Methanococcoides burtonii (strain DSM 6242 / NBRC 107633 / OCM 468 / ACE-M).